Consider the following 413-residue polypeptide: NADH:flavin oxidoreductase FG08077 (413 aa).

Residue A53 to C56 participates in FMN binding. Residue Y58 coordinates substrate. The FMN site is built by A88 and Q130. H211–H214 is a substrate binding site. Residues R264 and G370–R371 each bind FMN.

It belongs to the NADH:flavin oxidoreductase/NADH oxidase family. NamA subfamily. FMN serves as cofactor.

The protein operates within mycotoxin biosynthesis. NADH:flavin oxidoreductase; part of the gene cluster that mediates the biosynthesis of butenolide, a mycotoxin that shows antibiotic activity but does not seem to play a major role in the spread of head blight in wheat. Butenolide is derived from glutamic acid via a 4-acetamido-2-butenoic acid intermediate. The predicted function of the NADH:flavin oxidoreductase FG08077, the cytochrome P450 monooxygenase FG08079, the decarboxylase FG08083, and the putative acetyltransferase FG08082 are consistent with this pathway, however, the respective activities of the butelonide biosynthesis cluster enzymes have still to be experimentally determined. This chain is NADH:flavin oxidoreductase FG08077, found in Gibberella zeae (strain ATCC MYA-4620 / CBS 123657 / FGSC 9075 / NRRL 31084 / PH-1) (Wheat head blight fungus).